The primary structure comprises 695 residues: Segment polarity protein dishevelled homolog DVL-1 (695 aa).

Positions 1–85 constitute a DIX domain; the sequence is MAETKIIYHM…RVVSWLVLAE (85 aa). The disordered stretch occupies residues 89-235; the sequence is SDAGSQGTDS…QRLRQTDRAS (147 aa). A compositionally biased stretch (basic residues) spans 142 to 151; that stretch reads SHRRERARRR. The segment covering 152-171 has biased composition (basic and acidic residues); sequence NRDEAARTNGHPRGDRRRDL. Positions 177-192 are enriched in low complexity; that stretch reads SASTVLSSELESSSFI. Position 194 is a phosphoserine (serine 194). Residues 201–214 are compositionally biased toward low complexity; that stretch reads SRLSSSTEQSTSSR. The span at 215–228 shows a compositional bias: basic residues; the sequence is LVRKHKCRRRKQRL. The 73-residue stretch at 251–323 folds into the PDZ domain; the sequence is TVTLNMERHH…NDDAVRVLRE (73 aa). Residues 425–499 form the DEP domain; the sequence is PDSGLEIRDR…SEQCYYVFGD (75 aa). Over residues 559-580 the composition is skewed to low complexity; the sequence is SCGSGSAGSQQSEGSKSSGSTR. A disordered region spans residues 559–641; that stretch reads SCGSGSAGSQ…SQASAVAPGL (83 aa). Positions 622-635 are enriched in polar residues; the sequence is SQLSRGSSPRSQAS.

This sequence belongs to the DSH family. In terms of assembly, interacts with CXXC4. Interacts (via PDZ domain) with TMEM88. Interacts with BRD7 and INVS. Interacts (via PDZ domain) with VANGL1 and VANGL2 (via C-terminus). Interacts (via PDZ domain) with NXN. Interacts with ARRB1; the interaction is enhanced by phosphorylation of DVL1. Interacts with CYLD. Interacts (via PDZ domain) with RYK. Self-associates (via DIX domain) and forms higher homooligomers. Interacts (via PDZ domain) with DACT1 and FZD7, where DACT1 and FZD7 compete for the same binding site. Interacts (via DEP domain) with MUSK; the interaction is direct and mediates the formation a DVL1, MUSK and PAK1 ternary complex involved in AChR clustering. Interacts with DCDC2. Interacts with FOXK2. Interacts with PKD1 (via extracellular domain). Interacts (via PDZ domain) with CCDC88C/DAPLE; competes with CCDC88C for binding to frizzled receptor FZD7 and dissociates from CCDC88C following initiation of non-canonical Wnt signaling when CCDC88C displaces DVL1 from ligand-activated FZD7. Post-translationally, ubiquitinated; undergoes both 'Lys-48'-linked ubiquitination, leading to its subsequent degradation by the ubiquitin-proteasome pathway, and 'Lys-63'-linked ubiquitination. The interaction with INVS is required for ubiquitination. Deubiquitinated by CYLD, which acts on 'Lys-63'-linked ubiquitin chains. High levels are seen in the brain, testis and kidney, lower levels in the ovary, breast, muscle, liver and small intestine, and very low levels are seen in the spleen and thymus. A moderate level expression is seen in the heart.

Its subcellular location is the cell membrane. It is found in the cytoplasm. The protein resides in the cytosol. The protein localises to the cytoplasmic vesicle. Participates in Wnt signaling by binding to the cytoplasmic C-terminus of frizzled family members and transducing the Wnt signal to down-stream effectors. Plays a role both in canonical and non-canonical Wnt signaling. Plays a role in the signal transduction pathways mediated by multiple Wnt genes. Required for LEF1 activation upon WNT1 and WNT3A signaling. DVL1 and PAK1 form a ternary complex with MUSK which is important for MUSK-dependent regulation of AChR clustering during the formation of the neuromuscular junction (NMJ). The protein is Segment polarity protein dishevelled homolog DVL-1 (Dvl1) of Mus musculus (Mouse).